The following is a 239-amino-acid chain: Segregation and condensation protein A (239 aa).

This sequence belongs to the ScpA family. Component of a cohesin-like complex composed of ScpA, ScpB and the Smc homodimer, in which ScpA and ScpB bind to the head domain of Smc. The presence of the three proteins is required for the association of the complex with DNA.

The protein resides in the cytoplasm. Functionally, participates in chromosomal partition during cell division. May act via the formation of a condensin-like complex containing Smc and ScpB that pull DNA away from mid-cell into both cell halves. The protein is Segregation and condensation protein A of Streptococcus suis (strain 98HAH33).